Reading from the N-terminus, the 434-residue chain is CC-adding tRNA nucleotidyltransferase (434 aa).

19–22 (GAVR) provides a ligand contact to CTP. Positions 32 and 34 each coordinate Mg(2+). CTP contacts are provided by residues 90–91 (RD), Asn-95, 130–139 (DHLRSLRGVR), and Arg-175.

Belongs to the tRNA nucleotidyltransferase/poly(A) polymerase family. The cofactor is Mg(2+).

The enzyme catalyses a tRNA precursor + 2 CTP = a tRNA with a 3' CC end + 2 diphosphate. TRNA nucleotidyltransferase involved in the synthesis of the tRNA CCA terminus. Adds the two cytidine residues to tRNA. The protein is CC-adding tRNA nucleotidyltransferase of Thermus thermophilus (strain ATCC BAA-163 / DSM 7039 / HB27).